The following is a 675-amino-acid chain: DNA ligase (675 aa).

NAD(+) contacts are provided by residues 32-36 (DAEYD), 81-82 (SL), and E113. K115 acts as the N6-AMP-lysine intermediate in catalysis. NAD(+) contacts are provided by R136, E173, K291, and K315. Residues C409, C412, C427, and C433 each contribute to the Zn(2+) site. Residues 595 to 675 (SEKTYFFNKK…ELNSLIRIKE (81 aa)) form the BRCT domain.

This sequence belongs to the NAD-dependent DNA ligase family. LigA subfamily. Mg(2+) is required as a cofactor. Requires Mn(2+) as cofactor.

The enzyme catalyses NAD(+) + (deoxyribonucleotide)n-3'-hydroxyl + 5'-phospho-(deoxyribonucleotide)m = (deoxyribonucleotide)n+m + AMP + beta-nicotinamide D-nucleotide.. Functionally, DNA ligase that catalyzes the formation of phosphodiester linkages between 5'-phosphoryl and 3'-hydroxyl groups in double-stranded DNA using NAD as a coenzyme and as the energy source for the reaction. It is essential for DNA replication and repair of damaged DNA. This is DNA ligase from Buchnera aphidicola subsp. Acyrthosiphon pisum (strain 5A).